Reading from the N-terminus, the 221-residue chain is Small ribosomal subunit protein uS3 (221 aa).

The region spanning 39-108 is the KH type-2 domain; it reads IRKFVKKELF…NILINIVEVK (70 aa).

This sequence belongs to the universal ribosomal protein uS3 family. In terms of assembly, part of the 30S ribosomal subunit. Forms a tight complex with proteins S10 and S14.

Its function is as follows. Binds the lower part of the 30S subunit head. Binds mRNA in the 70S ribosome, positioning it for translation. The protein is Small ribosomal subunit protein uS3 of Clostridium botulinum (strain Alaska E43 / Type E3).